Here is a 372-residue protein sequence, read N- to C-terminus: uncharacterized protein (372 aa).

A disordered region spans residues 328–353; the sequence is KKGQPCKDEDAVTVPLPSSDPGKETQ.

In terms of biological role, induces the SOS system when expressed in E.coli, therefore, it may play a role in DNA metabolism and/or in genome stability. This is an uncharacterized protein from Saccharomyces cerevisiae (strain ATCC 204508 / S288c) (Baker's yeast).